Here is a 552-residue protein sequence, read N- to C-terminus: Putative transport protein APJL_0985 (552 aa).

Helical transmembrane passes span 4-24 (IAIIVSLLSLVAVLGLWIGHI), 29-49 (VGLGIGGVLFGGIIISHCTHL), 65-85 (FGLILFVYSIGIQVGPGFFAS), 95-115 (GFAVMIVGLSGILVALIHKLF), and 161-181 (IAYPFGIIGILLSMWLIRIIF). RCK C-terminal domains lie at 190 to 275 (QEFD…ILGE) and 277 to 360 (ADVS…IIGD). A run of 6 helical transmembrane segments spans residues 370 to 390 (MLPIFLGIGLGVLLGSLPLYL), 403 to 425 (GGPLVVALILARIGSIGKLYWFM), 438 to 458 (IVLFLSVVGLKAGANFLDTLL), 463 to 483 (LAWMGYGAIITFIPLIVTGFV), 492 to 512 (YLSLCGLLSGAMTDPPALAFA), and 529 to 549 (VYPLVMFLRIILPQLLAILLW).

Belongs to the AAE transporter (TC 2.A.81) family. YidE subfamily.

It localises to the cell membrane. The protein is Putative transport protein APJL_0985 of Actinobacillus pleuropneumoniae serotype 3 (strain JL03).